Consider the following 121-residue polypeptide: MNNAPHLYFAWQQLVEKSQLMLRLATEEQWDELIASEMAYVNAVQEIAHLTEEVEPSTTMQEQLRPMLHLILDNESKVKQLLQIRMDELAKLVGQSSVQKSVLSAYGDQGGFVLAPQDNLF.

Residues 1 to 50 are required for homodimerization; that stretch reads MNNAPHLYFAWQQLVEKSQLMLRLATEEQWDELIASEMAYVNAVQEIAHL. Residues 60–98 are fliD binding; it reads MQEQLRPMLHLILDNESKVKQLLQIRMDELAKLVGQSSV.

This sequence belongs to the FliT family. As to quaternary structure, homodimer. Interacts with FliD and FlhC.

The protein resides in the cytoplasm. The protein localises to the cytosol. In terms of biological role, dual-function protein that regulates the transcription of class 2 flagellar operons and that also acts as an export chaperone for the filament-capping protein FliD. As a transcriptional regulator, acts as an anti-FlhDC factor; it directly binds FlhC, thus inhibiting the binding of the FlhC/FlhD complex to class 2 promoters, resulting in decreased expression of class 2 flagellar operons. As a chaperone, effects FliD transition to the membrane by preventing its premature polymerization, and by directing it to the export apparatus. This chain is Flagellar protein FliT, found in Escherichia coli O17:K52:H18 (strain UMN026 / ExPEC).